We begin with the raw amino-acid sequence, 209 residues long: ATP synthase subunit O, mitochondrial (209 aa).

It belongs to the ATPase delta chain family. In terms of assembly, F-type ATPases have 2 components, CF(1) - the catalytic core - and CF(0) - the membrane proton channel. CF(1) has five subunits: alpha(3), beta(3), gamma(1), delta(1), epsilon(1). CF(0) has three main subunits: a, b and c.

It localises to the mitochondrion. Its subcellular location is the mitochondrion inner membrane. Its function is as follows. Mitochondrial membrane ATP synthase (F(1)F(0) ATP synthase or Complex V) produces ATP from ADP in the presence of a proton gradient across the membrane which is generated by electron transport complexes of the respiratory chain. F-type ATPases consist of two structural domains, F(1) - containing the extramembraneous catalytic core and F(0) - containing the membrane proton channel, linked together by a central stalk and a peripheral stalk. During catalysis, ATP synthesis in the catalytic domain of F(1) is coupled via a rotary mechanism of the central stalk subunits to proton translocation. Part of the complex F(0) domain and the peripheric stalk, which acts as a stator to hold the catalytic alpha(3)beta(3) subcomplex and subunit a/ATP6 static relative to the rotary elements. This chain is ATP synthase subunit O, mitochondrial, found in Drosophila melanogaster (Fruit fly).